A 456-amino-acid polypeptide reads, in one-letter code: tRNA modification GTPase MnmE (456 aa).

Positions 25, 82, and 121 each coordinate (6S)-5-formyl-5,6,7,8-tetrahydrofolate. The 163-residue stretch at 217-379 (GMKVVIAGRP…LKAHLKSVMG (163 aa)) folds into the TrmE-type G domain. Asparagine 227 provides a ligand contact to K(+). Residues 227–232 (NAGKSS), 246–252 (TNIAGTT), and 271–274 (DTAG) each bind GTP. Mg(2+) is bound at residue serine 231. K(+) contacts are provided by threonine 246, isoleucine 248, and threonine 251. A Mg(2+)-binding site is contributed by threonine 252. Lysine 456 contacts (6S)-5-formyl-5,6,7,8-tetrahydrofolate.

It belongs to the TRAFAC class TrmE-Era-EngA-EngB-Septin-like GTPase superfamily. TrmE GTPase family. Homodimer. Heterotetramer of two MnmE and two MnmG subunits. The cofactor is K(+).

The protein resides in the cytoplasm. Functionally, exhibits a very high intrinsic GTPase hydrolysis rate. Involved in the addition of a carboxymethylaminomethyl (cmnm) group at the wobble position (U34) of certain tRNAs, forming tRNA-cmnm(5)s(2)U34. The protein is tRNA modification GTPase MnmE of Saccharophagus degradans (strain 2-40 / ATCC 43961 / DSM 17024).